The primary structure comprises 435 residues: MIRKMSKNVVVIGTQWGDEGKGKIVDWLAESVQGVVRFQGGHNAGHTLWINGKKTILRLIPSGIMHDGVTCFIGNGVVLSPEALLREIEELEAAGLDVRSRLQVSEICTLILPYHVAVDKAREARKGEGKIGTTGRGIGPAYEDKVARRALRVQDLFNPALFDEKLAEVLDYHNFVLTQYLGAEPVSANEVRDQAMALAPALAPMVRDVSSNLFALQQEGKNLLFEGAQGALLDVDHGTYPFVTSSNCVAGAASAGAGVGPQALQYVLGITKAYTTRVGSGPFPTELVDEIGARLATIGKEFGSVTGRPRRCGWLDGAALKRSVRLNGISGLCITKLDVLDGLETIQLGVGYRVNGEFRDVLPYGAHAVAQAQAVLEELPGWTESTVGITEYSKLPVNARRYLERVAEVCGVPIDLVSTGPDRNKTIVLRHPFKG.

GTP-binding positions include 17–23 (GDEGKGK) and 45–47 (GHT). Residue Asp-18 is the Proton acceptor of the active site. Mg(2+)-binding residues include Asp-18 and Gly-45. IMP is bound by residues 18 to 21 (DEGK), 43 to 46 (NAGH), Thr-134, Arg-148, Gln-229, Thr-244, and Arg-308. Catalysis depends on His-46, which acts as the Proton donor. Residue 304–310 (SVTGRPR) coordinates substrate. GTP-binding positions include Arg-310, 336 to 338 (KLD), and 418 to 420 (STG).

This sequence belongs to the adenylosuccinate synthetase family. In terms of assembly, homodimer. Mg(2+) is required as a cofactor.

It localises to the cytoplasm. The catalysed reaction is IMP + L-aspartate + GTP = N(6)-(1,2-dicarboxyethyl)-AMP + GDP + phosphate + 2 H(+). Its pathway is purine metabolism; AMP biosynthesis via de novo pathway; AMP from IMP: step 1/2. Functionally, plays an important role in the de novo pathway of purine nucleotide biosynthesis. Catalyzes the first committed step in the biosynthesis of AMP from IMP. The protein is Adenylosuccinate synthetase of Bordetella pertussis (strain Tohama I / ATCC BAA-589 / NCTC 13251).